Consider the following 648-residue polypeptide: Transketolase (648 aa).

His22 serves as a coordination point for substrate. Thiamine diphosphate is bound by residues His62 and 109 to 111 (GPL). Residue Asp150 coordinates Mg(2+). Thiamine diphosphate-binding residues include Gly151 and Asn180. Residues Asn180 and Val182 each coordinate Mg(2+). Residues His252, Arg345, and Ser372 each contribute to the substrate site. Thiamine diphosphate is bound at residue His252. The Proton donor role is filled by Glu397. Position 423 (Phe423) interacts with thiamine diphosphate. Substrate is bound by residues His447, Asp455, and Arg506.

Belongs to the transketolase family. As to quaternary structure, homodimer. Mg(2+) serves as cofactor. Ca(2+) is required as a cofactor. The cofactor is Mn(2+). Requires Co(2+) as cofactor. It depends on thiamine diphosphate as a cofactor.

It carries out the reaction D-sedoheptulose 7-phosphate + D-glyceraldehyde 3-phosphate = aldehydo-D-ribose 5-phosphate + D-xylulose 5-phosphate. Catalyzes the transfer of a two-carbon ketol group from a ketose donor to an aldose acceptor, via a covalent intermediate with the cofactor thiamine pyrophosphate. The polypeptide is Transketolase (tkt) (Mycoplasma genitalium (strain ATCC 33530 / DSM 19775 / NCTC 10195 / G37) (Mycoplasmoides genitalium)).